We begin with the raw amino-acid sequence, 2339 residues long: Inverse autotransporter adhesin YeeJ (2339 aa).

The signal sequence occupies residues 1–26 (MGIKLRRLTAGICLITQLAFPMAAAA). A LysM domain is found at 50–98 (VPYTLGALESAQSVAERFGISVAELRKLNQFRTFARGFDNVRQGDELDV). Residues 125–400 (TSQQIGSLLA…SRYDLVDRNN (276 aa)) form an inverse autotransporter region. The tract at residues 513 to 605 (QKDSSVSLST…GVDAAKAPAV (93 aa)) is invasin 3 domain. Big-1 domains are found at residues 721 to 815 (IATL…VSFV), 822 to 913 (QVDL…VNFI), 920 to 1017 (ALTL…MTFV), 1024 to 1121 (VVVL…VTFV), 1128 to 1221 (QVVL…VHFI), 1229 to 1331 (IIEL…SINV), 1339 to 1432 (HLTL…VTYV), 1439 to 1535 (EITL…VNFI), 1542 to 1639 (QVNL…VTLI), 1646 to 1730 (KLAS…PTEV), 1746 to 1837 (ITSL…LEAI), 1840 to 1934 (KLTL…VKVT), and 1942 to 2034 (VASF…ITLV). Positions 2236–2339 (KSWWVNAGEA…FAYATCYKNL (104 aa)) are C-type lectin domain.

It belongs to the intimin/invasin family.

The protein localises to the cell outer membrane. Functionally, a cryptic inverse autotransporter, it is not expressed in wild-type strain MG1655. Upon overexpression shows increased adherence to polyvinyl chloride (PVC) plates and increased mature biofilm formation. Probably binds peptidoglycan. The chain is Inverse autotransporter adhesin YeeJ (yeeJ) from Escherichia coli (strain K12).